We begin with the raw amino-acid sequence, 200 residues long: 3-isopropylmalate dehydratase small subunit (200 aa).

This sequence belongs to the LeuD family. LeuD type 1 subfamily. Heterodimer of LeuC and LeuD.

The enzyme catalyses (2R,3S)-3-isopropylmalate = (2S)-2-isopropylmalate. Its pathway is amino-acid biosynthesis; L-leucine biosynthesis; L-leucine from 3-methyl-2-oxobutanoate: step 2/4. Its function is as follows. Catalyzes the isomerization between 2-isopropylmalate and 3-isopropylmalate, via the formation of 2-isopropylmaleate. The sequence is that of 3-isopropylmalate dehydratase small subunit from Pectobacterium carotovorum subsp. carotovorum (strain PC1).